Reading from the N-terminus, the 550-residue chain is CTP synthase (550 aa).

The segment at 1–267 (MKTKFIFITG…DQKIAIMLRL (267 aa)) is amidoligase domain. S14 contributes to the CTP binding site. Residue S14 coordinates UTP. ATP-binding positions include 15 to 20 (SLGKGL) and D72. Mg(2+) contacts are provided by D72 and E141. Residues 148–150 (DIE), 188–193 (KTKPTQ), and K224 contribute to the CTP site. UTP is bound by residues 188 to 193 (KTKPTQ) and K224. Residues 292–545 (TIGIVGKYVD…IKAAKKEAMG (254 aa)) form the Glutamine amidotransferase type-1 domain. G354 contacts L-glutamine. C381 acts as the Nucleophile; for glutamine hydrolysis in catalysis. L-glutamine is bound by residues 382 to 385 (LGMQ), E405, and R473. Residues H518 and E520 contribute to the active site.

The protein belongs to the CTP synthase family. Homotetramer.

It catalyses the reaction UTP + L-glutamine + ATP + H2O = CTP + L-glutamate + ADP + phosphate + 2 H(+). The catalysed reaction is L-glutamine + H2O = L-glutamate + NH4(+). The enzyme catalyses UTP + NH4(+) + ATP = CTP + ADP + phosphate + 2 H(+). The protein operates within pyrimidine metabolism; CTP biosynthesis via de novo pathway; CTP from UDP: step 2/2. Its activity is regulated as follows. Allosterically activated by GTP, when glutamine is the substrate; GTP has no effect on the reaction when ammonia is the substrate. The allosteric effector GTP functions by stabilizing the protein conformation that binds the tetrahedral intermediate(s) formed during glutamine hydrolysis. Inhibited by the product CTP, via allosteric rather than competitive inhibition. Its function is as follows. Catalyzes the ATP-dependent amination of UTP to CTP with either L-glutamine or ammonia as the source of nitrogen. Regulates intracellular CTP levels through interactions with the four ribonucleotide triphosphates. The chain is CTP synthase from Nitratidesulfovibrio vulgaris (strain DSM 19637 / Miyazaki F) (Desulfovibrio vulgaris).